The sequence spans 344 residues: MAASSSEVSEMKGVEDSSNTHSEGPRHSEEGMGPVQVVAENLDQPEALQSGPDTTAAPVDSGPKAELAPETTETPVETPETVQATDLSVNPGEDSKTCPSPKEACQEPASRPEVNREATAEQGAEQQSAAPPEPTSEQALQLNTQSDPQPTSQPPPKPPLQAEPPTQENPTTEVLTESTGEKQENGAVVPLQAGDGEEGPAPQPHSPPSTKTPPANGAPPRVLQKLVEEDRIGRAHGGHPGSPRGSLSRHPSSQLAGPGVEGGEGTQKPRDYIILAILSCFCPMWPVNIVAFAYAVMSRNSLQQGDVDGAQRLGRVAKLLSIVALVGGVLIIIASCVINLGVYK.

Disordered regions lie at residues 1–220 and 233–265; these read MAAS…GAPP and GRAH…GGEG. Residues 1–272 are Cytoplasmic-facing; that stretch reads MAASSSEVSE…GEGTQKPRDY (272 aa). Position 28 is a phosphoserine (serine 28). Over residues 69-82 the composition is skewed to low complexity; sequence PETTETPVETPETV. A phosphothreonine mark is found at threonine 74 and threonine 78. The segment covering 124–143 has biased composition (polar residues); the sequence is AEQQSAAPPEPTSEQALQLN. Positions 151–162 are enriched in pro residues; sequence TSQPPPKPPLQA. Over residues 168–178 the composition is skewed to polar residues; the sequence is ENPTTEVLTES. Over residues 201–211 the composition is skewed to pro residues; the sequence is APQPHSPPSTK. The residue at position 242 (serine 242) is a Phosphoserine. Arginine 244 carries the omega-N-methylarginine modification. Residues serine 252 and serine 253 each carry the phosphoserine modification. Residues 273 to 293 constitute an intramembrane region (helical); the sequence is IILAILSCFCPMWPVNIVAFA. Topologically, residues 294 to 321 are cytoplasmic; the sequence is YAVMSRNSLQQGDVDGAQRLGRVAKLLS. A helical membrane pass occupies residues 322–342; it reads IVALVGGVLIIIASCVINLGV. The Extracellular segment spans residues 343 to 344; that stretch reads YK.

The protein belongs to the CD225/Dispanin family. In terms of assembly, component of the outer core of AMPAR complex. AMPAR complex consists of an inner core made of 4 pore-forming GluA/GRIA proteins (GRIA1, GRIA2, GRIA3 and GRIA4) and 4 major auxiliary subunits arranged in a twofold symmetry. One of the two pairs of distinct binding sites is occupied either by CNIH2, CNIH3 or CACNG2, CACNG3. The other harbors CACNG2, CACNG3, CACNG4, CACNG8 or GSG1L. This inner core of AMPAR complex is complemented by outer core constituents binding directly to the GluA/GRIA proteins at sites distinct from the interaction sites of the inner core constituents. Outer core constituents include at least PRRT1, PRRT2, CKAMP44/SHISA9, FRRS1L and NRN1. The proteins of the inner and outer core serve as a platform for other, more peripherally associated AMPAR constituents. Alone or in combination, these auxiliary subunits control the gating and pharmacology of the AMPAR complex and profoundly impact their biogenesis and protein processing. Interacts with intersectin 1/ITSN1. Interacts with SNARE complex components, including SNAP25, STX1A, SYT1 and SYT2; this interaction may inhibit SNARE complex formation. In terms of tissue distribution, neuron-specific expression throughout the brain, including hippocampus (at protein level).

The protein resides in the cell membrane. The protein localises to the presynaptic cell membrane. It is found in the synapse. It localises to the cell projection. Its subcellular location is the axon. The protein resides in the cytoplasmic vesicle. The protein localises to the secretory vesicle. It is found in the synaptic vesicle membrane. It localises to the postsynaptic density membrane. Its subcellular location is the dendritic spine. Its function is as follows. As a component of the outer core of AMPAR complex, may be involved in synaptic transmission in the central nervous system. In hippocampal neurons, in presynaptic terminals, plays an important role in the final steps of neurotransmitter release, possibly by regulating Ca(2+)-sensing. In the cerebellum, may inhibit SNARE complex formation and down-regulate short-term facilitation. The chain is Proline-rich transmembrane protein 2 (Prrt2) from Rattus norvegicus (Rat).